Consider the following 466-residue polypeptide: Secreted RxLR effector protein 101 (466 aa).

A signal peptide spans 1–21; that stretch reads MRGAYSVITALLVVASSQIAA. Positions 48–63 match the RxLR-dEER motif; that stretch reads RYLRGSQHVHDSNEER. Disordered stretches follow at residues 99 to 127 and 384 to 405; these read KMPH…GANA and RTFN…VRSS. Over residues 109 to 121 the composition is skewed to basic residues; sequence KVSRVTRTGKKMT. Positions 385 to 395 are enriched in polar residues; the sequence is TFNGNTDTASL.

Belongs to the RxLR effector family.

Its subcellular location is the secreted. The protein localises to the host nucleus. Functionally, secreted effector that partially suppresses the host cell death induced by cell death-inducing proteins. This Plasmopara viticola (Downy mildew of grapevine) protein is Secreted RxLR effector protein 101.